Consider the following 442-residue polypeptide: Proline--tRNA ligase (442 aa).

It belongs to the class-II aminoacyl-tRNA synthetase family. ProS type 2 subfamily. Homodimer.

It localises to the cytoplasm. It catalyses the reaction tRNA(Pro) + L-proline + ATP = L-prolyl-tRNA(Pro) + AMP + diphosphate. In terms of biological role, catalyzes the attachment of proline to tRNA(Pro) in a two-step reaction: proline is first activated by ATP to form Pro-AMP and then transferred to the acceptor end of tRNA(Pro). The protein is Proline--tRNA ligase of Rhizobium meliloti (strain 1021) (Ensifer meliloti).